Reading from the N-terminus, the 602-residue chain is ATP-dependent DNA helicase II subunit 1 (602 aa).

The 216-residue stretch at 268 to 483 (FQCPLILDEK…YDNMKKVTQS (216 aa)) folds into the Ku domain. Phosphoserine is present on residues Ser370, Ser371, and Ser372.

Belongs to the ku70 family. Heterodimer of YKU70/HDF1 and YKU80/HDF2. Post-translationally, sumoylated by MMS21.

It localises to the nucleus. The protein resides in the chromosome. It is found in the telomere. The enzyme catalyses ATP + H2O = ADP + phosphate + H(+). Functionally, single-stranded DNA-dependent ATP-dependent helicase. Involved in non-homologous end joining (NHEJ) DNA double strand break repair. DNA-binding is sequence-independent but has a high affinity to nicks in double-stranded DNA and to the ends of duplex DNA. Binds to naturally occurring chromosomal ends, and therefore provides chromosomal end protection. Appears to have a role in recruitment of telomerase and CDC13 to the telomere and the subsequent telomere elongation. Required also for telomere recombination to repair telomeric ends in the absence of telomerase. KU70, of the KU70/KU80 heterodimer, binds to the stem loop of TLC1, the RNA component of telomerase. Involved in telomere maintenance. Interacts with telomeric repeats and subtelomeric sequences thereby controlling telomere length and protecting against subtelomeric rearrangement. Maintains telomeric chromatin, which is involved in silencing the expression of genes located at the telomere. Required for mating-type switching. In Saccharomyces cerevisiae (strain ATCC 204508 / S288c) (Baker's yeast), this protein is ATP-dependent DNA helicase II subunit 1 (YKU70).